Reading from the N-terminus, the 1331-residue chain is Contactin-associated protein-like 2 (1331 aa).

The signal sequence occupies residues 1–27; sequence MQAAPRAGCGAALLLWIVSSCLCRAWT. The Extracellular portion of the chain corresponds to 28-1262; the sequence is APSTSQKCDE…IRNGVNRNSA (1235 aa). Positions 35–181 constitute an F5/8 type C domain; it reads CDEPLVSGLP…IGLRIEVYGC (147 aa). An intrachain disulfide couples C35 to C181. The 153-residue stretch at 216–368 folds into the Laminin G-like 1 domain; the sequence is FKTSESEGVI…SNVGNLSFSC (153 aa). N-linked (GlcNAc...) asparagine glycosylation is found at N289, N346, N363, N379, N436, N506, N507, and N546. A disulfide bridge links C336 with C368. A Laminin G-like 2 domain is found at 401–552; sequence FRTWNPNGLL…SFANVSIDMC (152 aa). Cystine bridges form between C520/C552, C558/C569, C563/C578, and C580/C590. An EGF-like 1 domain is found at 554 to 591; that stretch reads IIDRCVPNHCEHGGKCSQTWDSFKCTCDETGYSGATCH. The 207-residue stretch at 592 to 798 folds into the Fibrinogen C-terminal domain; the sequence is NSIYEPSCEA…LRCQGDRNYW (207 aa). Residues N630 and N735 are each glycosylated (N-linked (GlcNAc...) asparagine). The region spanning 799 to 963 is the Laminin G-like 3 domain; it reads NAASFPNPSS…KVTSGFISGC (165 aa). Intrachain disulfides connect C936–C963, C967–C980, C974–C989, and C991–C1001. The EGF-like 2 domain occupies 963–1002; that stretch reads CSGHCTSYGTNCENGGKCLERYHGYSCDCSNTAYDGTFCN. The interval 1026-1045 is disordered; the sequence is ARDSSSRVDNAPDQQNSHPD. The Laminin G-like 4 domain maps to 1055 to 1214; the sequence is FSTTKAPCIL…IQGELVESNC (160 aa). Residues N1116 and N1198 are each glycosylated (N-linked (GlcNAc...) asparagine). The cysteines at positions 1178 and 1214 are disulfide-linked. Residues 1263-1283 traverse the membrane as a helical segment; the sequence is IIGGVIAVVIFTILCTLVFLI. The Cytoplasmic portion of the chain corresponds to 1284–1331; that stretch reads RYMFRHKGTYHTNEAKGAESAESADAAIMNNDPNFTETIDESKKEWLI. Phosphoserine is present on residues S1303 and S1306.

It belongs to the neurexin family. Interacts (via C-terminus) with KCNA2. Interacts with GPR37. In terms of tissue distribution, predominantly expressed in nervous system.

The protein resides in the membrane. It is found in the cell projection. The protein localises to the axon. Its subcellular location is the cell junction. It localises to the paranodal septate junction. Required for gap junction formation. Required, with CNTNAP1, for radial and longitudinal organization of myelinated axons. Plays a role in the formation of functional distinct domains critical for saltatory conduction of nerve impulses in myelinated nerve fibers. Demarcates the juxtaparanodal region of the axo-glial junction. The sequence is that of Contactin-associated protein-like 2 (CNTNAP2) from Homo sapiens (Human).